We begin with the raw amino-acid sequence, 537 residues long: Tyrosine-protein kinase Fyn (537 aa).

Gly-2 carries N-myristoyl glycine lipidation. Residues Cys-3 and Cys-6 are each lipidated (S-palmitoyl cysteine). Position 12 is a phosphothreonine; by PKC (Thr-12). Residues 14 to 35 (LTEERDGSLNQSSGYRYGTDPT) form a disordered region. Ser-21 and Ser-26 each carry phosphoserine. The SH3 domain occupies 82–143 (TGVTLFVALY…PSNYVAPVDS (62 aa)). Residues 149–246 (WYFGKLGRKD…GLCCRLVVPC (98 aa)) form the SH2 domain. Tyr-185 is modified (phosphotyrosine). One can recognise a Protein kinase domain in the interval 271 to 524 (LQLIKRLGNG…YLQSFLEDYF (254 aa)). ATP is bound by residues 277–285 (LGNGQFGEV) and Lys-299. The active-site Proton acceptor is the Asp-390. Tyr-420 carries the phosphotyrosine; by autocatalysis modification. Tyr-531 is modified (phosphotyrosine; by CSK).

Belongs to the protein kinase superfamily. Tyr protein kinase family. SRC subfamily. Interacts (via its SH3 domain) with PIK3R1 and PRMT8. Interacts with FYB1, PAG1, and SH2D1A. Interacts with CD79A (tyrosine-phosphorylated form); the interaction increases FYN activity. Interacts (via SH2 domain) with CSF1R (tyrosine phosphorylated). Interacts with TOM1L1 (phosphorylated form). Interacts with KDR (tyrosine phosphorylated). Interacts (via SH3 domain) with KLHL2 (via N-terminus). Interacts with SH2D1A and SLAMF1. Interacts with ITCH; the interaction phosphorylates ITCH and negatively regulates its activity. Interacts with FASLG. Interacts with RUNX3. Interacts with KIT. Interacts with EPHA8; possible downstream effector of EPHA8 in regulation of cell adhesion. Interacts with PTK2/FAK1; this interaction leads to PTK2/FAK1 phosphorylation and activation. Interacts with CAV1; this interaction couples integrins to the Ras-ERK pathway. Interacts with UNC119. Interacts (via SH2 domain) with PTPRH (phosphorylated form). Interacts with PTPRO (phosphorylated form). Interacts with PTPRB (phosphorylated form). Interacts with FYB2. Interacts with DSCAM. Interacts with SKAP1 and FYB1; this interaction promotes the phosphorylation of CLNK. Interacts with NEDD9; in the presence of PTK2. As to quaternary structure, (Microbial infection) Interacts (via its SH3 domain) with hepatitis E virus/HEV protein ORF3. The cofactor is Mn(2+). Post-translationally, autophosphorylated at Tyr-420. Phosphorylation on the C-terminal tail at Tyr-531 by CSK maintains the enzyme in an inactive state. PTPRC/CD45 dephosphorylates Tyr-531 leading to activation. Ultraviolet B (UVB) strongly increase phosphorylation at Thr-12 and kinase activity, and promotes translocation from the cytoplasm to the nucleus. Dephosphorylation at Tyr-420 by PTPN2 negatively regulates T-cell receptor signaling. Phosphorylated at tyrosine residues, which can be enhanced by NTN1. Palmitoylated. Palmitoylation at Cys-3 and Cys-6, probably by ZDHHC21, regulates subcellular location. As to expression, isoform 1 is highly expressed in the brain. Isoform 2 is expressed in cells of hemopoietic lineages, especially T-lymphocytes.

It localises to the cytoplasm. Its subcellular location is the nucleus. The protein resides in the cell membrane. The protein localises to the perikaryon. It catalyses the reaction L-tyrosyl-[protein] + ATP = O-phospho-L-tyrosyl-[protein] + ADP + H(+). Inhibited by phosphorylation of Tyr-531 by leukocyte common antigen and activated by dephosphorylation of this site. Its function is as follows. Non-receptor tyrosine-protein kinase that plays a role in many biological processes including regulation of cell growth and survival, cell adhesion, integrin-mediated signaling, cytoskeletal remodeling, cell motility, immune response and axon guidance. Inactive FYN is phosphorylated on its C-terminal tail within the catalytic domain. Following activation by PKA, the protein subsequently associates with PTK2/FAK1, allowing PTK2/FAK1 phosphorylation, activation and targeting to focal adhesions. Involved in the regulation of cell adhesion and motility through phosphorylation of CTNNB1 (beta-catenin) and CTNND1 (delta-catenin). Regulates cytoskeletal remodeling by phosphorylating several proteins including the actin regulator WAS and the microtubule-associated proteins MAP2 and MAPT. Promotes cell survival by phosphorylating AGAP2/PIKE-A and preventing its apoptotic cleavage. Participates in signal transduction pathways that regulate the integrity of the glomerular slit diaphragm (an essential part of the glomerular filter of the kidney) by phosphorylating several slit diaphragm components including NPHS1, KIRREL1 and TRPC6. Plays a role in neural processes by phosphorylating DPYSL2, a multifunctional adapter protein within the central nervous system, ARHGAP32, a regulator for Rho family GTPases implicated in various neural functions, and SNCA, a small pre-synaptic protein. Involved in reelin signaling by mediating phosphorylation of DAB1 following reelin (RELN)-binding to its receptor. Participates in the downstream signaling pathways that lead to T-cell differentiation and proliferation following T-cell receptor (TCR) stimulation. Phosphorylates PTK2B/PYK2 in response to T-cell receptor activation. Also participates in negative feedback regulation of TCR signaling through phosphorylation of PAG1, thereby promoting interaction between PAG1 and CSK and recruitment of CSK to lipid rafts. CSK maintains LCK and FYN in an inactive form. Promotes CD28-induced phosphorylation of VAV1. In mast cells, phosphorylates CLNK after activation of immunoglobulin epsilon receptor signaling. Can also promote CD244-mediated NK cell activation. The chain is Tyrosine-protein kinase Fyn (FYN) from Homo sapiens (Human).